The following is a 382-amino-acid chain: Chaperone protein DnaJ (382 aa).

The J domain maps to Asp-5–Gly-70. The CR-type zinc finger occupies Gly-140–Glu-218. The Zn(2+) site is built by Cys-153, Cys-156, Cys-170, Cys-173, Cys-192, Cys-195, Cys-206, and Cys-209. CXXCXGXG motif repeat units follow at residues Cys-153 to Gly-160, Cys-170 to Gly-177, Cys-192 to Gly-199, and Cys-206 to Gly-213.

It belongs to the DnaJ family. In terms of assembly, homodimer. Requires Zn(2+) as cofactor.

It localises to the cytoplasm. Functionally, participates actively in the response to hyperosmotic and heat shock by preventing the aggregation of stress-denatured proteins and by disaggregating proteins, also in an autonomous, DnaK-independent fashion. Unfolded proteins bind initially to DnaJ; upon interaction with the DnaJ-bound protein, DnaK hydrolyzes its bound ATP, resulting in the formation of a stable complex. GrpE releases ADP from DnaK; ATP binding to DnaK triggers the release of the substrate protein, thus completing the reaction cycle. Several rounds of ATP-dependent interactions between DnaJ, DnaK and GrpE are required for fully efficient folding. Also involved, together with DnaK and GrpE, in the DNA replication of plasmids through activation of initiation proteins. The protein is Chaperone protein DnaJ of Rhizobium rhizogenes (strain K84 / ATCC BAA-868) (Agrobacterium radiobacter).